The chain runs to 59 residues: UPF0181 protein YoaH (59 aa).

The protein belongs to the UPF0181 family.

This chain is UPF0181 protein YoaH, found in Escherichia coli O127:H6 (strain E2348/69 / EPEC).